Reading from the N-terminus, the 299-residue chain is Probable plastid-lipid-associated protein 13, chloroplastic (299 aa).

The transit peptide at 1–48 directs the protein to the chloroplast; it reads MALIHGSVPGTSAVRLVFSTSASPSRFCLNVPVVKQGWKNSCRRRVLR. At Ala2 the chain carries N-acetylvaline.

This sequence belongs to the PAP/fibrillin family.

It localises to the plastid. It is found in the chloroplast. The protein localises to the plastoglobule. This chain is Probable plastid-lipid-associated protein 13, chloroplastic (PAP13), found in Arabidopsis thaliana (Mouse-ear cress).